We begin with the raw amino-acid sequence, 505 residues long: Histidine ammonia-lyase (505 aa).

A cross-link (5-imidazolinone (Ala-Gly)) is located at residues 141 to 143 (ASG). Ser142 bears the 2,3-didehydroalanine (Ser) mark.

It belongs to the PAL/histidase family. Post-translationally, contains an active site 4-methylidene-imidazol-5-one (MIO), which is formed autocatalytically by cyclization and dehydration of residues Ala-Ser-Gly.

Its subcellular location is the cytoplasm. The catalysed reaction is L-histidine = trans-urocanate + NH4(+). It functions in the pathway amino-acid degradation; L-histidine degradation into L-glutamate; N-formimidoyl-L-glutamate from L-histidine: step 1/3. The sequence is that of Histidine ammonia-lyase from Bacillus cereus (strain AH187).